Here is a 130-residue protein sequence, read N- to C-terminus: Small ribosomal subunit protein uS9 (130 aa).

The protein belongs to the universal ribosomal protein uS9 family.

In Nitrosomonas eutropha (strain DSM 101675 / C91 / Nm57), this protein is Small ribosomal subunit protein uS9.